A 539-amino-acid chain; its full sequence is Probable transcription factor GLK2 (539 aa).

The tract at residues 86-218 is disordered; the sequence is FASSPDDEPP…NSHGKRKVKV (133 aa). Composition is skewed to low complexity over residues 99-111 and 121-130; these read SAPGPGEPAAAAG and AAAAAAAAAA. A compositionally biased stretch (basic and acidic residues) spans 144-161; the sequence is KKDDEERSSSLPEEKDAK. An HTH myb-type domain is found at 212 to 271; it reads GKRKVKVDWTPELHRRFVQAVEQLGIDKAVPSRILELMGIECLTRHNIASHLQKYRSHRK. The segment at residues 242–267 is a DNA-binding region (H-T-H motif); sequence PSRILELMGIECLTRHNIASHLQKYR.

Expressed in leaves.

The protein localises to the nucleus. In terms of biological role, probable transcriptional activator that promotes chloroplast development. Acts as an activator of nuclear photosynthetic genes involved in chlorophyll biosynthesis, light harvesting, and electron transport. This chain is Probable transcription factor GLK2 (GLK2), found in Oryza sativa subsp. japonica (Rice).